The chain runs to 352 residues: Lipopolysaccharide core biosynthesis mannosyltransferase LpcC (352 aa).

It belongs to the glycosyltransferase group 1 family. Glycosyltransferase 4 subfamily.

It participates in bacterial outer membrane biogenesis; LPS core biosynthesis. Functionally, acts at transfer of mannose group to a 3-deoxy-D-mono octulonic acid (KDO) via an alpha-1,5 linkage. This is Lipopolysaccharide core biosynthesis mannosyltransferase LpcC (lpcC) from Rhizobium leguminosarum bv. viciae.